The sequence spans 64 residues: Large ribosomal subunit protein uL29 (64 aa).

It belongs to the universal ribosomal protein uL29 family.

The sequence is that of Large ribosomal subunit protein uL29 from Acaryochloris marina (strain MBIC 11017).